Here is a 143-residue protein sequence, read N- to C-terminus: Ribonuclease P protein component 2 (143 aa).

The protein belongs to the eukaryotic/archaeal RNase P protein component 2 family. Consists of a catalytic RNA component and at least 4-5 protein subunits.

It localises to the cytoplasm. It catalyses the reaction Endonucleolytic cleavage of RNA, removing 5'-extranucleotides from tRNA precursor.. In terms of biological role, part of ribonuclease P, a protein complex that generates mature tRNA molecules by cleaving their 5'-ends. The protein is Ribonuclease P protein component 2 of Saccharolobus solfataricus (strain ATCC 35092 / DSM 1617 / JCM 11322 / P2) (Sulfolobus solfataricus).